The chain runs to 194 residues: Orotate phosphoribosyltransferase (194 aa).

116–124 (EDIVTTGLS) provides a ligand contact to 5-phospho-alpha-D-ribose 1-diphosphate. Positions 120 and 148 each coordinate orotate.

It belongs to the purine/pyrimidine phosphoribosyltransferase family. PyrE subfamily. In terms of assembly, homodimer. Mg(2+) serves as cofactor.

It carries out the reaction orotidine 5'-phosphate + diphosphate = orotate + 5-phospho-alpha-D-ribose 1-diphosphate. It functions in the pathway pyrimidine metabolism; UMP biosynthesis via de novo pathway; UMP from orotate: step 1/2. In terms of biological role, catalyzes the transfer of a ribosyl phosphate group from 5-phosphoribose 1-diphosphate to orotate, leading to the formation of orotidine monophosphate (OMP). The chain is Orotate phosphoribosyltransferase from Caulobacter vibrioides (strain ATCC 19089 / CIP 103742 / CB 15) (Caulobacter crescentus).